Here is an 85-residue protein sequence, read N- to C-terminus: uncharacterized protein (85 aa).

This is an uncharacterized protein from Acidithiobacillus ferrooxidans (Thiobacillus ferrooxidans).